The primary structure comprises 892 residues: Putative ubiquitin carboxyl-terminal hydrolase 11 (892 aa).

In terms of domain architecture, DUSP spans 17–132; sequence YTPEEERRIV…GGPPVPRKLI (116 aa). Residues 69-89 are disordered; sequence EPSEVTRPGPIDNHDIIDSES. Residues 301–880 enclose the USP domain; it reads GGLQNLGNTC…AAYVLFYQRV (580 aa). Cysteine 310 functions as the Nucleophile in the catalytic mechanism. The interval 636 to 660 is disordered; that stretch reads NSGNENGHVPDESSRSILSRDTETE. Residues 643 to 657 are compositionally biased toward basic and acidic residues; it reads HVPDESSRSILSRDT. The Proton acceptor role is filled by histidine 838.

Belongs to the peptidase C19 family.

The enzyme catalyses Thiol-dependent hydrolysis of ester, thioester, amide, peptide and isopeptide bonds formed by the C-terminal Gly of ubiquitin (a 76-residue protein attached to proteins as an intracellular targeting signal).. In terms of biological role, recognizes and hydrolyzes the peptide bond at the C-terminal Gly of ubiquitin. Involved in the processing of poly-ubiquitin precursors as well as that of ubiquitinated proteins. In Arabidopsis thaliana (Mouse-ear cress), this protein is Putative ubiquitin carboxyl-terminal hydrolase 11 (UBP11).